Reading from the N-terminus, the 197-residue chain is ADP-ribosylation factor-like protein 6-interacting protein 1 (197 aa).

4 consecutive transmembrane segments (helical) span residues 43 to 63 (VVFG…LSLI), 64 to 84 (TLLS…PMVS), 129 to 149 (TVFV…GAII), and 150 to 170 (NNLL…GLQN).

Belongs to the ARL6ip family.

It localises to the membrane. This Drosophila melanogaster (Fruit fly) protein is ADP-ribosylation factor-like protein 6-interacting protein 1.